A 622-amino-acid chain; its full sequence is Phosphoribomutase (622 aa).

Residues Thr57, Arg61, 158 to 159 (SH), and Lys168 each bind substrate. The active-site Phosphoserine intermediate is Ser158. A Mg(2+)-binding site is contributed by Ser158. Ser158 bears the Phosphoserine mark. Asp325, Asp327, and Asp329 together coordinate Mg(2+). Residues 329-330 (DR), Thr404, 428-430 (EEA), and Lys442 each bind substrate.

Belongs to the phosphohexose mutase family. It depends on Mg(2+) as a cofactor.

The protein resides in the cytoplasm. Its subcellular location is the nucleus. The catalysed reaction is alpha-D-ribose 1-phosphate = D-ribose 5-phosphate. Functionally, major phosphoribomutase that converts ribose 1-phosphate to ribose 5-phosphate. Involved in ribose salvage via the pentose phosphate pathway. The sequence is that of Phosphoribomutase from Saccharomyces cerevisiae (strain ATCC 204508 / S288c) (Baker's yeast).